A 57-amino-acid polypeptide reads, in one-letter code: Putative antitoxin VapB4 (57 aa).

Possibly the antitoxin component of a type II toxin-antitoxin (TA) system. Its cognate toxin is VapC4 (Potential). The sequence is that of Putative antitoxin VapB4 (vapB4) from Methanocaldococcus jannaschii (strain ATCC 43067 / DSM 2661 / JAL-1 / JCM 10045 / NBRC 100440) (Methanococcus jannaschii).